The sequence spans 413 residues: Aspartate aminotransferase, cytoplasmic (413 aa).

L-aspartate contacts are provided by Gly39, Trp141, and Asn195. Lys259 carries the post-translational modification N6-(pyridoxal phosphate)lysine. L-aspartate is bound at residue Arg387.

This sequence belongs to the class-I pyridoxal-phosphate-dependent aminotransferase family. In terms of assembly, homodimer. Requires pyridoxal 5'-phosphate as cofactor.

Its subcellular location is the cytoplasm. It catalyses the reaction L-aspartate + 2-oxoglutarate = oxaloacetate + L-glutamate. The enzyme catalyses L-cysteine + 2-oxoglutarate = 2-oxo-3-sulfanylpropanoate + L-glutamate. The catalysed reaction is (2S)-2-aminobutanoate + 2-oxoglutarate = 2-oxobutanoate + L-glutamate. It carries out the reaction 3-sulfino-L-alanine + 2-oxoglutarate = 3-sulfinopyruvate + L-glutamate. Biosynthesis of L-glutamate from L-aspartate or L-cysteine. Important regulator of levels of glutamate, the major excitatory neurotransmitter of the vertebrate central nervous system. Acts as a scavenger of glutamate in brain neuroprotection. The aspartate aminotransferase activity is involved in hepatic glucose synthesis during development and in adipocyte glyceroneogenesis. Using L-cysteine as substrate, regulates levels of mercaptopyruvate, an important source of hydrogen sulfide. Mercaptopyruvate is converted into H(2)S via the action of 3-mercaptopyruvate sulfurtransferase (3MST). Hydrogen sulfide is an important synaptic modulator and neuroprotectant in the brain. The sequence is that of Aspartate aminotransferase, cytoplasmic from Sus scrofa (Pig).